Here is a 239-residue protein sequence, read N- to C-terminus: Ribonuclease Le2 (239 aa).

5 disulfide bridges follow: Cys5–Cys22, Cys13–Cys58, Cys21–Cys126, Cys66–Cys118, and Cys191–Cys225. Active-site residues include His51, Glu111, and His115.

Belongs to the RNase T2 family.

The catalysed reaction is a ribonucleotidyl-ribonucleotide-RNA + H2O = a 3'-end 3'-phospho-ribonucleotide-RNA + a 5'-end dephospho-ribonucleoside-RNA + H(+). Functionally, this is a base non-specific and adenylic acid preferential ribonuclease. The sequence is that of Ribonuclease Le2 from Lentinula edodes (Shiitake mushroom).